Here is a 526-residue protein sequence, read N- to C-terminus: Glucose-6-phosphate isomerase (526 aa).

Catalysis depends on Glu343, which acts as the Proton donor. Residues His374 and Lys494 contribute to the active site.

It belongs to the GPI family.

It is found in the cytoplasm. It catalyses the reaction alpha-D-glucose 6-phosphate = beta-D-fructose 6-phosphate. Its pathway is carbohydrate biosynthesis; gluconeogenesis. The protein operates within carbohydrate degradation; glycolysis; D-glyceraldehyde 3-phosphate and glycerone phosphate from D-glucose: step 2/4. Functionally, catalyzes the reversible isomerization of glucose-6-phosphate to fructose-6-phosphate. The protein is Glucose-6-phosphate isomerase of Dechloromonas aromatica (strain RCB).